Here is a 445-residue protein sequence, read N- to C-terminus: Argininosuccinate synthase (445 aa).

ATP is bound by residues 17–25 and Ala-43; that span reads AFSGGLDTS. Tyr-99 is a binding site for L-citrulline. 2 residues coordinate ATP: Gly-129 and Thr-131. The L-aspartate site is built by Thr-131, Asn-135, and Asp-136. L-citrulline is bound at residue Asn-135. Asp-136 provides a ligand contact to ATP. Residues Arg-139 and Ser-192 each contribute to the L-citrulline site. An ATP-binding site is contributed by Asp-194. L-citrulline contacts are provided by Thr-201, Glu-203, and Glu-280.

Belongs to the argininosuccinate synthase family. Type 2 subfamily. In terms of assembly, homotetramer.

Its subcellular location is the cytoplasm. The catalysed reaction is L-citrulline + L-aspartate + ATP = 2-(N(omega)-L-arginino)succinate + AMP + diphosphate + H(+). It functions in the pathway amino-acid biosynthesis; L-arginine biosynthesis; L-arginine from L-ornithine and carbamoyl phosphate: step 2/3. The sequence is that of Argininosuccinate synthase from Gemmatimonas aurantiaca (strain DSM 14586 / JCM 11422 / NBRC 100505 / T-27).